The sequence spans 370 residues: DNA replication and repair protein RecF (370 aa).

Position 30 to 37 (30 to 37 (GENAQGKT)) interacts with ATP.

This sequence belongs to the RecF family.

The protein resides in the cytoplasm. In terms of biological role, the RecF protein is involved in DNA metabolism; it is required for DNA replication and normal SOS inducibility. RecF binds preferentially to single-stranded, linear DNA. It also seems to bind ATP. This Staphylococcus carnosus (strain TM300) protein is DNA replication and repair protein RecF.